We begin with the raw amino-acid sequence, 206 residues long: Sclerostin domain-containing protein 1 (206 aa).

Residues 1-22 (MLLSAIHFYGLLLACTFTRSYS) form the signal peptide. Residues 40-68 (APASPSSNSTLNQARNGGRHYAGTGSDRN) are disordered. Polar residues predominate over residues 43 to 54 (SPSSNSTLNQAR). An N-linked (GlcNAc...) asparagine glycan is attached at Asn-47. 4 disulfide bridges follow: Cys-75-Cys-133, Cys-89-Cys-147, Cys-100-Cys-163, and Cys-104-Cys-165. Positions 75–170 (CRELRSTKYI…TACKCKRYTR (96 aa)) constitute a CTCK domain. An N-linked (GlcNAc...) asparagine glycan is attached at Asn-173. Residues 176 to 206 (SHNFEGTSQAKPVQHHKERKRASKSSKHSTS) are disordered. Over residues 188-206 (VQHHKERKRASKSSKHSTS) the composition is skewed to basic residues.

This sequence belongs to the sclerostin family. Interacts with LRP6.

Its subcellular location is the secreted. Its function is as follows. Can activate or inhibit Wnt signaling in a context-dependent manner. Activates the canonical Wnt pathway whereby acts through Disheveled proteins and beta-catenin. Antagonises Wnt signaling through the canonical pathways presumably by blocking accessibility of certain WNTs to their receptors. Induces posterior neural markers via components of the canonical Wnt pathway. The protein is Sclerostin domain-containing protein 1 (SOSTDC1) of Gallus gallus (Chicken).